We begin with the raw amino-acid sequence, 190 residues long: Potassium-transporting ATPase KdpC subunit (190 aa).

Residues Thr10–Gly30 form a helical membrane-spanning segment.

Belongs to the KdpC family. In terms of assembly, the system is composed of three essential subunits: KdpA, KdpB and KdpC.

Its subcellular location is the cell inner membrane. Its function is as follows. Part of the high-affinity ATP-driven potassium transport (or Kdp) system, which catalyzes the hydrolysis of ATP coupled with the electrogenic transport of potassium into the cytoplasm. This subunit acts as a catalytic chaperone that increases the ATP-binding affinity of the ATP-hydrolyzing subunit KdpB by the formation of a transient KdpB/KdpC/ATP ternary complex. In Escherichia coli O127:H6 (strain E2348/69 / EPEC), this protein is Potassium-transporting ATPase KdpC subunit.